The primary structure comprises 63 residues: Cecropin-1/3 (63 aa).

A signal peptide spans 1-23 (MNFYKVFIFVALILAISLGQSEA). Arg62 carries the arginine amide modification.

It belongs to the cecropin family.

Its subcellular location is the secreted. Functionally, cecropins have lytic and antibacterial activity against several Gram-positive and Gram-negative bacteria. The polypeptide is Cecropin-1/3 (Cec1) (Drosophila virilis (Fruit fly)).